A 181-amino-acid chain; its full sequence is HGPRTase-like protein 2 (181 aa).

The protein belongs to the purine/pyrimidine phosphoribosyltransferase family. Archaeal HPRT subfamily.

In terms of biological role, may catalyze a purine salvage reaction, the substrate is unknown. The sequence is that of HGPRTase-like protein 2 from Haloquadratum walsbyi (strain DSM 16854 / JCM 12705 / C23).